A 419-amino-acid polypeptide reads, in one-letter code: Serine hydroxymethyltransferase (419 aa).

(6S)-5,6,7,8-tetrahydrofolate is bound by residues L121 and 125–127 (GHL). K230 is modified (N6-(pyridoxal phosphate)lysine). 355–357 (SPF) contributes to the (6S)-5,6,7,8-tetrahydrofolate binding site.

This sequence belongs to the SHMT family. As to quaternary structure, homodimer. The cofactor is pyridoxal 5'-phosphate.

It localises to the cytoplasm. The enzyme catalyses (6R)-5,10-methylene-5,6,7,8-tetrahydrofolate + glycine + H2O = (6S)-5,6,7,8-tetrahydrofolate + L-serine. It functions in the pathway one-carbon metabolism; tetrahydrofolate interconversion. Its pathway is amino-acid biosynthesis; glycine biosynthesis; glycine from L-serine: step 1/1. Its function is as follows. Catalyzes the reversible interconversion of serine and glycine with tetrahydrofolate (THF) serving as the one-carbon carrier. This reaction serves as the major source of one-carbon groups required for the biosynthesis of purines, thymidylate, methionine, and other important biomolecules. Also exhibits THF-independent aldolase activity toward beta-hydroxyamino acids, producing glycine and aldehydes, via a retro-aldol mechanism. This is Serine hydroxymethyltransferase from Streptococcus uberis (strain ATCC BAA-854 / 0140J).